The sequence spans 461 residues: Ribulose bisphosphate carboxylase (461 aa).

Asn-112 is a binding site for substrate. The active-site Proton acceptor is the Lys-167. Residue Lys-169 participates in substrate binding. Residues Lys-192, Asp-194, and Glu-195 each contribute to the Mg(2+) site. Position 192 is an N6-carboxylysine (Lys-192). His-288 functions as the Proton acceptor in the catalytic mechanism. Residues Arg-289, His-322, and Ser-369 each coordinate substrate.

It belongs to the RuBisCO large chain family. Type II subfamily. In terms of assembly, homodimer. Requires Mg(2+) as cofactor.

The catalysed reaction is 2 (2R)-3-phosphoglycerate + 2 H(+) = D-ribulose 1,5-bisphosphate + CO2 + H2O. The enzyme catalyses D-ribulose 1,5-bisphosphate + O2 = 2-phosphoglycolate + (2R)-3-phosphoglycerate + 2 H(+). In terms of biological role, ruBisCO catalyzes two reactions: the carboxylation of D-ribulose 1,5-bisphosphate, the primary event in carbon dioxide fixation, as well as the oxidative fragmentation of the pentose substrate. Both reactions occur simultaneously and in competition at the same active site. This chain is Ribulose bisphosphate carboxylase, found in Rhodopseudomonas palustris (strain BisB5).